The sequence spans 148 residues: NPC intracellular cholesterol transporter 2 homolog a (148 aa).

An N-terminal signal peptide occupies residues 1–16 (MLRYAVIACAALVVFA). 3 disulfides stabilise this stretch: Cys-24–Cys-140, Cys-39–Cys-46, and Cys-92–Cys-99. The N-linked (GlcNAc...) asparagine glycan is linked to Asn-51.

This sequence belongs to the NPC2 family. In terms of tissue distribution, broadly expressed with a higher level of expression in many tissues, including midgut, salivary gland and ventral nerve cord.

The protein resides in the secreted. In terms of biological role, functions redundantly with Npc2b in regulating sterol homeostasis and ecdysteroid biosynthesis, probably by controlling the availability of sterol substrate. In Drosophila melanogaster (Fruit fly), this protein is NPC intracellular cholesterol transporter 2 homolog a.